Reading from the N-terminus, the 257-residue chain is Putative hydro-lyase BceJ2315_40370 (257 aa).

It belongs to the D-glutamate cyclase family.

This Burkholderia cenocepacia (strain ATCC BAA-245 / DSM 16553 / LMG 16656 / NCTC 13227 / J2315 / CF5610) (Burkholderia cepacia (strain J2315)) protein is Putative hydro-lyase BceJ2315_40370.